We begin with the raw amino-acid sequence, 210 residues long: Redox-sensing transcriptional repressor Rex (210 aa).

The segment at residues 17 to 56 (KYYRYLAELMDNDVDRISSKELSEKIGFTASQIRQDLNNF) is a DNA-binding region (H-T-H motif). 91-96 (GAGNIG) provides a ligand contact to NAD(+).

The protein belongs to the transcriptional regulatory Rex family. Homodimer.

Its subcellular location is the cytoplasm. Modulates transcription in response to changes in cellular NADH/NAD(+) redox state. This Clostridium novyi (strain NT) protein is Redox-sensing transcriptional repressor Rex.